We begin with the raw amino-acid sequence, 268 residues long: MLFVHAHPDDESITTGGTIARYSAEGAHVTVVTCTLGEEGEIIPAELEQLGAWAGDQLGGYRIGELAEAGVALGWSEHRFLGGPGRWRDSGMAGVESNEHPRAFVRGAMSEQVEQLLAVFDEVRPEVVVTYDPNGGYGHPDHIRAHRVATAAVERSEGVRRLFYTVSSREATTRGLAALRRDERVPFRVPADEELPTTPDADITTRVDISAYREVKFAALRAHRTQITVGPDCFALSNGIAQPVPTTEFFVLARGPKEGADTDLFGGL.

Zn(2+) contacts are provided by His7, Asp10, and His142.

This sequence belongs to the MshB deacetylase family. Zn(2+) serves as cofactor.

The catalysed reaction is 1D-myo-inositol 2-acetamido-2-deoxy-alpha-D-glucopyranoside + H2O = 1D-myo-inositol 2-amino-2-deoxy-alpha-D-glucopyranoside + acetate. Catalyzes the deacetylation of 1D-myo-inositol 2-acetamido-2-deoxy-alpha-D-glucopyranoside (GlcNAc-Ins) in the mycothiol biosynthesis pathway. The polypeptide is 1D-myo-inositol 2-acetamido-2-deoxy-alpha-D-glucopyranoside deacetylase (Saccharomonospora viridis (strain ATCC 15386 / DSM 43017 / JCM 3036 / CCUG 5913 / NBRC 12207 / NCIMB 9602 / P101) (Thermoactinomyces viridis)).